The chain runs to 79 residues: Translational regulator CsrA (79 aa).

It belongs to the CsrA/RsmA family. In terms of assembly, homodimer; the beta-strands of each monomer intercalate to form a hydrophobic core, while the alpha-helices form wings that extend away from the core.

The protein localises to the cytoplasm. Functionally, a translational regulator that binds mRNA to regulate translation initiation and/or mRNA stability. Usually binds in the 5'-UTR at or near the Shine-Dalgarno sequence preventing ribosome-binding, thus repressing translation. Its main target seems to be the major flagellin gene, while its function is anatagonized by FliW. This Leptospira biflexa serovar Patoc (strain Patoc 1 / Ames) protein is Translational regulator CsrA.